Consider the following 340-residue polypeptide: Chitinase 7 (340 aa).

An N-terminal signal peptide occupies residues 1–32; that stretch reads MIAARAANLQVAMKALALAVLALAYAAATARA. Positions 33–73 constitute a Chitin-binding type-1 domain; that stretch reads EQCGRQAGGARCPNRLCCSRWGWCGLTDDYCKGGCQSQCRV. 7 disulfides stabilise this stretch: cysteine 35–cysteine 50, cysteine 44–cysteine 56, cysteine 49–cysteine 63, cysteine 67–cysteine 71, cysteine 118–cysteine 173, cysteine 185–cysteine 193, and cysteine 293–cysteine 323.

Belongs to the glycosyl hydrolase 19 family. Chitinase class I subfamily. In terms of tissue distribution, expressed in pistils, stamens and lodicules.

It carries out the reaction Random endo-hydrolysis of N-acetyl-beta-D-glucosaminide (1-&gt;4)-beta-linkages in chitin and chitodextrins.. In terms of biological role, hydrolyzes chitin and may play a role in defense against fungal pathogens containing chitin. The polypeptide is Chitinase 7 (Cht7) (Oryza sativa subsp. japonica (Rice)).